Consider the following 158-residue polypeptide: Cyclic pyranopterin monophosphate synthase (158 aa).

Residues 75-77 (LCH) and 113-114 (ME) each bind substrate. Asp-128 is a catalytic residue.

This sequence belongs to the MoaC family. Homohexamer; trimer of dimers.

It catalyses the reaction (8S)-3',8-cyclo-7,8-dihydroguanosine 5'-triphosphate = cyclic pyranopterin phosphate + diphosphate. It participates in cofactor biosynthesis; molybdopterin biosynthesis. In terms of biological role, catalyzes the conversion of (8S)-3',8-cyclo-7,8-dihydroguanosine 5'-triphosphate to cyclic pyranopterin monophosphate (cPMP). This is Cyclic pyranopterin monophosphate synthase from Paraburkholderia phytofirmans (strain DSM 17436 / LMG 22146 / PsJN) (Burkholderia phytofirmans).